The sequence spans 957 residues: Glycine dehydrogenase (decarboxylating) (957 aa).

Position 708 is an N6-(pyridoxal phosphate)lysine (K708).

The protein belongs to the GcvP family. In terms of assembly, the glycine cleavage system is composed of four proteins: P, T, L and H. It depends on pyridoxal 5'-phosphate as a cofactor.

It carries out the reaction N(6)-[(R)-lipoyl]-L-lysyl-[glycine-cleavage complex H protein] + glycine + H(+) = N(6)-[(R)-S(8)-aminomethyldihydrolipoyl]-L-lysyl-[glycine-cleavage complex H protein] + CO2. In terms of biological role, the glycine cleavage system catalyzes the degradation of glycine. The P protein binds the alpha-amino group of glycine through its pyridoxal phosphate cofactor; CO(2) is released and the remaining methylamine moiety is then transferred to the lipoamide cofactor of the H protein. The chain is Glycine dehydrogenase (decarboxylating) from Escherichia coli (strain ATCC 8739 / DSM 1576 / NBRC 3972 / NCIMB 8545 / WDCM 00012 / Crooks).